The chain runs to 343 residues: Armadillo repeat-containing protein 10 (343 aa).

The chain crosses the membrane as a helical span at residues 5-27; the sequence is RGAGWVAAGLLLGAGACYCIYRL. Positions 43–83 are disordered; the sequence is SKSAGALEEGTSEGQLCGRSARPQTGGTWESQWSKTSQPED. Phosphoserine is present on Ser45. A Phosphothreonine modification is found at Glu50. Polar residues predominate over residues 64 to 82; it reads RPQTGGTWESQWSKTSQPE. A Phosphothreonine modification is found at Thr85. Residues 138–180 form an ARM repeat; that stretch reads GGIPIVANKINHSNQSIKEKALNALNNLSVNVENQIKIKIYIS.

Interacts with the DNA-binding domain of p53/TP53. In terms of tissue distribution, expressed in all tissues tested with higher expression in placenta, liver, kidney, heart and brain.

The protein localises to the endoplasmic reticulum membrane. It is found in the mitochondrion outer membrane. Functionally, may play a role in cell survival and cell growth. May suppress the transcriptional activity of p53/TP53. The chain is Armadillo repeat-containing protein 10 (ARMC10) from Homo sapiens (Human).